The primary structure comprises 570 residues: Pantothenate kinase 2, mitochondrial (570 aa).

Residues methionine 1–glycine 31 constitute a mitochondrion transit peptide. Disordered regions lie at residues isoleucine 34 to arginine 94 and glycine 127 to arginine 198. The Nucleolar localization signal motif lies at arginine 82–arginine 94. Positions arginine 84–alanine 93 are enriched in basic residues. The segment covering proline 155–arginine 164 has biased composition (basic and acidic residues). 3 positions are modified to phosphoserine: serine 168, serine 169, and serine 189. Positions serine 168–alanine 179 are enriched in low complexity. The short motif at leucine 268–leucine 275 is the Nuclear export signal element. Glutamate 338 serves as the catalytic Proton acceptor. Acetyl-CoA is bound by residues serine 392, serine 395, and arginine 407.

Belongs to the type II pantothenate kinase family. Homodimer. Synthesized as a 62-kDa precursor which is proteolytically processed by the mitochondrial-processing peptidase (MPP) via a 59-kDa intermediate to yield the mature mitochondrial 48-kDa subunit. As to expression, expressed in the brain (at protein level). Ubiquitous. Highly expressed in the testis. Expressed in the umbilical vein endothelial cells (HUVEC).

Its subcellular location is the mitochondrion. It localises to the mitochondrion intermembrane space. The protein localises to the nucleus. The protein resides in the cytoplasm. The enzyme catalyses (R)-pantothenate + ATP = (R)-4'-phosphopantothenate + ADP + H(+). Its pathway is cofactor biosynthesis; coenzyme A biosynthesis; CoA from (R)-pantothenate: step 1/5. With respect to regulation, strongly inhibited by acetyl-CoA and its thioesters. Activated by palmitoylcarnitine. Its function is as follows. Mitochondrial isoform that catalyzes the phosphorylation of pantothenate to generate 4'-phosphopantothenate in the first and rate-determining step of coenzyme A (CoA) synthesis. Required for angiogenic activity of umbilical vein of endothelial cells (HUVEC). Cytoplasmic isoform that catalyzes the phosphorylation of pantothenate to generate 4'-phosphopantothenate in the first and rate-determining step of coenzyme A (CoA) synthesis. This is Pantothenate kinase 2, mitochondrial (PANK2) from Homo sapiens (Human).